We begin with the raw amino-acid sequence, 308 residues long: ATP synthase gamma chain (308 aa).

Belongs to the ATPase gamma chain family. In terms of assembly, F-type ATPases have 2 components, CF(1) - the catalytic core - and CF(0) - the membrane proton channel. CF(1) has five subunits: alpha(3), beta(3), gamma(1), delta(1), epsilon(1). CF(0) has three main subunits: a, b and c.

It is found in the cell membrane. Produces ATP from ADP in the presence of a proton gradient across the membrane. The gamma chain is believed to be important in regulating ATPase activity and the flow of protons through the CF(0) complex. The polypeptide is ATP synthase gamma chain (Lacticaseibacillus paracasei (strain ATCC 334 / BCRC 17002 / CCUG 31169 / CIP 107868 / KCTC 3260 / NRRL B-441) (Lactobacillus paracasei)).